Reading from the N-terminus, the 102-residue chain is MNGQNIRIRLKAFDHRILDASTREIVSTAKRTGASVRGPVPLPTRIEKFTVNRSPHVDKKSREQFEMRTHKRLLDIVDPTPQTVDALMKLDLAAGVDVEIKL.

It belongs to the universal ribosomal protein uS10 family. As to quaternary structure, part of the 30S ribosomal subunit.

Its function is as follows. Involved in the binding of tRNA to the ribosomes. The polypeptide is Small ribosomal subunit protein uS10 (Rhizobium meliloti (strain 1021) (Ensifer meliloti)).